Here is a 197-residue protein sequence, read N- to C-terminus: Probable low-affinity putrescine importer PlaP (197 aa).

A run of 5 helical transmembrane segments spans residues 33–53, 85–105, 107–127, 140–160, and 163–183; these read GVLI…HAGV, VLLV…TATA, INLG…SQFW, FNYL…WINL, and SSMV…ACVT.

This sequence belongs to the amino acid-polyamine-organocation (APC) superfamily.

The protein localises to the cell inner membrane. The catalysed reaction is putrescine(in) + H(+)(in) = putrescine(out) + H(+)(out). In terms of biological role, putrescine importer. The protein is Probable low-affinity putrescine importer PlaP (plaP) of Klebsiella pneumoniae.